The primary structure comprises 1241 residues: ATP-dependent helicase/nuclease subunit A (1241 aa).

Residues 12–485 (SQWTDDQWKA…IDLAKNFRSR (474 aa)) form the UvrD-like helicase ATP-binding domain. 33 to 40 (AAAGSGKT) contributes to the ATP binding site. The region spanning 505-805 (GEIDYDADAE…RIMTIHKSKG (301 aa)) is the UvrD-like helicase C-terminal domain.

The protein belongs to the helicase family. AddA subfamily. Heterodimer of AddA and AddB/RexB. It depends on Mg(2+) as a cofactor.

It carries out the reaction Couples ATP hydrolysis with the unwinding of duplex DNA by translocating in the 3'-5' direction.. The enzyme catalyses ATP + H2O = ADP + phosphate + H(+). Functionally, the heterodimer acts as both an ATP-dependent DNA helicase and an ATP-dependent, dual-direction single-stranded exonuclease. Recognizes the chi site generating a DNA molecule suitable for the initiation of homologous recombination. The AddA nuclease domain is required for chi fragment generation; this subunit has the helicase and 3' -&gt; 5' nuclease activities. This is ATP-dependent helicase/nuclease subunit A from Bacillus cereus (strain ZK / E33L).